We begin with the raw amino-acid sequence, 263 residues long: MWFLILFLALSLGGIDAAPPVQSRVVGGFKCEKNSQPWHVAVFRYNKYICGGVLLNPNWVLTAAHCYGNATSQYNVWLGKNKLFQREPSAQHRWVSKSFPHPDYNMSLLNDDIPQPKDKSNDLMLLRLSEPADITDAVKPIDLPTEEPKLGSTCLASGWGSITPTKWQKPNDLQCVFIKLLPNENCTKPYLHKVTDVMLCAGEMGGGKDTCAGDSGGPLICDGILHGITSWGPVPCGKPNAPAIYTKLIKFASWIKDTMAKNP.

Positions Met1–Ala17 are cleaved as a signal peptide. A propeptide spans Ala18–Arg24 (activation peptide). Residues Val25–Ala260 enclose the Peptidase S1 domain. Intrachain disulfides connect Cys31–Cys175, Cys50–Cys66, Cys154–Cys221, Cys186–Cys200, and Cys211–Cys236. His65 serves as the catalytic Charge relay system. Asn69 and Asn105 each carry an N-linked (GlcNAc...) asparagine glycan. Asp122 functions as the Charge relay system in the catalytic mechanism. Asn185 carries N-linked (GlcNAc...) asparagine glycosylation. The active-site Charge relay system is the Ser215.

It belongs to the peptidase S1 family. Kallikrein subfamily.

The enzyme catalyses Preferential cleavage of Arg-|-Xaa bonds in small molecule substrates. Highly selective action to release kallidin (lysyl-bradykinin) from kininogen involves hydrolysis of Met-|-Xaa or Leu-|-Xaa.. In terms of biological role, glandular kallikreins cleave Met-Lys and Arg-Ser bonds in kininogen to release Lys-bradykinin. The polypeptide is Kallikrein 1-related peptidase b24 (Klk1b24) (Mus musculus (Mouse)).